The following is a 228-amino-acid chain: NOI-like protein (228 aa).

Residues 56 to 75 (AQDHQHSEKHHNDTSTDYHV) show a composition bias toward basic and acidic residues. 2 disordered regions span residues 56–87 (AQDHQHSEKHHNDTSTDYHVVKQHRRKHHRRE) and 99–133 (RPHRSPFQGVDMDSHRSRNHGTSATMSSSVKRNSD). Basic residues predominate over residues 76 to 86 (VKQHRRKHHRR). Residues 118-133 (HGTSATMSSSVKRNSD) are compositionally biased toward polar residues.

Belongs to the RIN4 family.

This is NOI-like protein from Elaeis oleifera (American oil palm).